Here is a 393-residue protein sequence, read N- to C-terminus: Sugar efflux transporter A (393 aa).

A run of 12 helical transmembrane segments spans residues V22 to L42, F51 to L71, K82 to N102, V107 to F127, I152 to F172, A174 to L194, L219 to M239, L253 to G273, L287 to A307, L308 to L328, L344 to A364, and V366 to C386.

It belongs to the major facilitator superfamily. Set transporter family.

The protein resides in the cell inner membrane. Involved in the efflux of sugars. The physiological role may be the reduction of the intracellular concentration of toxic sugars or sugar metabolites. Transports IPTG, lactose and arabinose. This is Sugar efflux transporter A (sotA) from Dickeya chrysanthemi (Pectobacterium chrysanthemi).